We begin with the raw amino-acid sequence, 406 residues long: MQAVERPVQTTDSLVDTTIHRRKTRAVKVGNVTIGSDYPVVVQSMINEDTLDIEGSVAAIRRLHEIGCEIVRVTVPSMAHARSLAQIKAKLAETYQAVPIVADVHHNGMKIALEVAKHVDKVRINPGLYVFEQASGDRTGYTEAEFAAIGEKIRETLEPLVVSLRDQGKAMRIGVNHGSLAERMLFTYGDTPEGMVESALEFIRICQSLDFHNLIISMKASRVPVMLAAYRLMAKRMDELGMDYPLHLGVTEAGDGEYGRIKSTAGIGTLLAEGIGDTIRVSLTEAPEKEIPVCYSILQALGLRKTMVEYVACPSCGRTLFNLEEVLHKVREATNHLTGLDIAVMGCIVNGPGEMADADYGYVGKTPGVISLYRGREEIRKVPEAQGVEELINLIKADGRWVDPPQ.

The [4Fe-4S] cluster site is built by cysteine 313, cysteine 316, cysteine 347, and glutamate 354.

It belongs to the IspG family. [4Fe-4S] cluster is required as a cofactor.

The catalysed reaction is (2E)-4-hydroxy-3-methylbut-2-enyl diphosphate + 2 oxidized [2Fe-2S]-[ferredoxin] + H2O = 2-C-methyl-D-erythritol 2,4-cyclic diphosphate + 2 reduced [2Fe-2S]-[ferredoxin] + H(+). It participates in isoprenoid biosynthesis; isopentenyl diphosphate biosynthesis via DXP pathway; isopentenyl diphosphate from 1-deoxy-D-xylulose 5-phosphate: step 5/6. Functionally, converts 2C-methyl-D-erythritol 2,4-cyclodiphosphate (ME-2,4cPP) into 1-hydroxy-2-methyl-2-(E)-butenyl 4-diphosphate. The polypeptide is 4-hydroxy-3-methylbut-2-en-1-yl diphosphate synthase (ferredoxin) (Picosynechococcus sp. (strain ATCC 27264 / PCC 7002 / PR-6) (Agmenellum quadruplicatum)).